The primary structure comprises 259 residues: Ribosomal RNA small subunit methyltransferase A (259 aa).

Positions 13, 15, 40, 61, 85, and 105 each coordinate S-adenosyl-L-methionine.

This sequence belongs to the class I-like SAM-binding methyltransferase superfamily. rRNA adenine N(6)-methyltransferase family. RsmA subfamily.

The protein resides in the cytoplasm. It carries out the reaction adenosine(1518)/adenosine(1519) in 16S rRNA + 4 S-adenosyl-L-methionine = N(6)-dimethyladenosine(1518)/N(6)-dimethyladenosine(1519) in 16S rRNA + 4 S-adenosyl-L-homocysteine + 4 H(+). Its function is as follows. Specifically dimethylates two adjacent adenosines (A1518 and A1519) in the loop of a conserved hairpin near the 3'-end of 16S rRNA in the 30S particle. May play a critical role in biogenesis of 30S subunits. The sequence is that of Ribosomal RNA small subunit methyltransferase A from Mycoplasma genitalium (strain ATCC 33530 / DSM 19775 / NCTC 10195 / G37) (Mycoplasmoides genitalium).